Consider the following 161-residue polypeptide: Putative pre-16S rRNA nuclease (161 aa).

The segment at 141 to 161 (AAGSPPGALVPRNRVDPDRHA) is disordered.

It belongs to the YqgF nuclease family.

Its subcellular location is the cytoplasm. Functionally, could be a nuclease involved in processing of the 5'-end of pre-16S rRNA. The polypeptide is Putative pre-16S rRNA nuclease (Clavibacter michiganensis subsp. michiganensis (strain NCPPB 382)).